Consider the following 334-residue polypeptide: 4-hydroxy-3-methylbut-2-enyl diphosphate reductase (334 aa).

Cysteine 19 serves as a coordination point for [4Fe-4S] cluster. Residues histidine 48 and histidine 84 each coordinate (2E)-4-hydroxy-3-methylbut-2-enyl diphosphate. Residues histidine 48 and histidine 84 each coordinate dimethylallyl diphosphate. 2 residues coordinate isopentenyl diphosphate: histidine 48 and histidine 84. Residue cysteine 106 coordinates [4Fe-4S] cluster. Histidine 134 is a binding site for (2E)-4-hydroxy-3-methylbut-2-enyl diphosphate. Histidine 134 provides a ligand contact to dimethylallyl diphosphate. Position 134 (histidine 134) interacts with isopentenyl diphosphate. Glutamate 136 functions as the Proton donor in the catalytic mechanism. Threonine 175 contacts (2E)-4-hydroxy-3-methylbut-2-enyl diphosphate. Cysteine 205 is a [4Fe-4S] cluster binding site. Residues serine 233, serine 234, asparagine 235, and serine 278 each contribute to the (2E)-4-hydroxy-3-methylbut-2-enyl diphosphate site. 4 residues coordinate dimethylallyl diphosphate: serine 233, serine 234, asparagine 235, and serine 278. Serine 233, serine 234, asparagine 235, and serine 278 together coordinate isopentenyl diphosphate.

This sequence belongs to the IspH family. [4Fe-4S] cluster is required as a cofactor.

The catalysed reaction is isopentenyl diphosphate + 2 oxidized [2Fe-2S]-[ferredoxin] + H2O = (2E)-4-hydroxy-3-methylbut-2-enyl diphosphate + 2 reduced [2Fe-2S]-[ferredoxin] + 2 H(+). The enzyme catalyses dimethylallyl diphosphate + 2 oxidized [2Fe-2S]-[ferredoxin] + H2O = (2E)-4-hydroxy-3-methylbut-2-enyl diphosphate + 2 reduced [2Fe-2S]-[ferredoxin] + 2 H(+). It participates in isoprenoid biosynthesis; dimethylallyl diphosphate biosynthesis; dimethylallyl diphosphate from (2E)-4-hydroxy-3-methylbutenyl diphosphate: step 1/1. It functions in the pathway isoprenoid biosynthesis; isopentenyl diphosphate biosynthesis via DXP pathway; isopentenyl diphosphate from 1-deoxy-D-xylulose 5-phosphate: step 6/6. Catalyzes the conversion of 1-hydroxy-2-methyl-2-(E)-butenyl 4-diphosphate (HMBPP) into a mixture of isopentenyl diphosphate (IPP) and dimethylallyl diphosphate (DMAPP). Acts in the terminal step of the DOXP/MEP pathway for isoprenoid precursor biosynthesis. In Chelativorans sp. (strain BNC1), this protein is 4-hydroxy-3-methylbut-2-enyl diphosphate reductase.